We begin with the raw amino-acid sequence, 384 residues long: Carbamoyl phosphate synthase small chain (384 aa).

A CPSase region spans residues Met1–Glu193. Residues Ser51, Gly245, and Gly247 each contribute to the L-glutamine site. One can recognise a Glutamine amidotransferase type-1 domain in the interval His197–Arg384. Cys273 serves as the catalytic Nucleophile. The L-glutamine site is built by Leu274, Gln277, Asn315, Gly317, and Phe318. Active-site residues include His357 and Glu359.

It belongs to the CarA family. Composed of two chains; the small (or glutamine) chain promotes the hydrolysis of glutamine to ammonia, which is used by the large (or ammonia) chain to synthesize carbamoyl phosphate. Tetramer of heterodimers (alpha,beta)4.

The catalysed reaction is hydrogencarbonate + L-glutamine + 2 ATP + H2O = carbamoyl phosphate + L-glutamate + 2 ADP + phosphate + 2 H(+). It carries out the reaction L-glutamine + H2O = L-glutamate + NH4(+). Its pathway is amino-acid biosynthesis; L-arginine biosynthesis; carbamoyl phosphate from bicarbonate: step 1/1. The protein operates within pyrimidine metabolism; UMP biosynthesis via de novo pathway; (S)-dihydroorotate from bicarbonate: step 1/3. Functionally, small subunit of the glutamine-dependent carbamoyl phosphate synthetase (CPSase). CPSase catalyzes the formation of carbamoyl phosphate from the ammonia moiety of glutamine, carbonate, and phosphate donated by ATP, constituting the first step of 2 biosynthetic pathways, one leading to arginine and/or urea and the other to pyrimidine nucleotides. The small subunit (glutamine amidotransferase) binds and cleaves glutamine to supply the large subunit with the substrate ammonia. This Stutzerimonas stutzeri (Pseudomonas stutzeri) protein is Carbamoyl phosphate synthase small chain.